The sequence spans 413 residues: Hemolin (413 aa).

The first 18 residues, 1 to 18 (MVSKSIVALAACVAMCVA), serve as a signal peptide directing secretion. 4 consecutive Ig-like C2-type domains span residues 25–112 (PVLK…HIIS), 121–215 (PTTF…LVGY), 233–322 (PMYV…VKLT), and 327–411 (PRFT…TLVI). 4 disulfides stabilise this stretch: Cys-46-Cys-97, Cys-141-Cys-199, Cys-252-Cys-305, and Cys-349-Cys-395. The N-linked (GlcNAc...) asparagine glycan is linked to Asn-283.

Belongs to the hemolin family. As to expression, hemolymph.

It is found in the secreted. In terms of biological role, insect-immune protein with antimicrobial activity. Forms a protein complex at the bacterial surface. Can inhibit hemocyte aggregation. In Manduca sexta (Tobacco hawkmoth), this protein is Hemolin.